Reading from the N-terminus, the 289-residue chain is Iodotyrosine deiodinase 1 (289 aa).

The chain crosses the membrane as a helical span at residues 1–21 (MYFLTPILVAILCILVVWIFK). Residues 47–58 (DLKDSSDLHQAE) show a composition bias toward basic and acidic residues. A disordered region spans residues 47–69 (DLKDSSDLHQAEEDADEWQESEE). Residues 59-69 (EDADEWQESEE) show a composition bias toward acidic residues. FMN-binding positions include 100-104 (RRSVR), serine 128, and 128-129 (SG). Residues alanine 130, glutamate 157, tyrosine 161, and lysine 182 each coordinate 3,5-diiodo-L-tyrosine. 4 residues coordinate 3-iodo-L-tyrosine: alanine 130, glutamate 157, tyrosine 161, and lysine 182. FMN is bound by residues 237-239 (TTT) and arginine 279.

This sequence belongs to the nitroreductase family. Homodimer. The cofactor is FMN.

It localises to the cell membrane. Its subcellular location is the cytoplasmic vesicle membrane. It carries out the reaction 2 iodide + L-tyrosine + 2 NADP(+) = 3,5-diiodo-L-tyrosine + 2 NADPH + H(+). It catalyses the reaction iodide + L-tyrosine + NADP(+) = 3-iodo-L-tyrosine + NADPH. The catalysed reaction is 3-iodo-L-tyrosine + iodide + NADP(+) = 3,5-diiodo-L-tyrosine + NADPH + H(+). The enzyme catalyses L-tyrosine + chloride + NADP(+) = 3-chloro-L-tyrosine + NADPH. It carries out the reaction bromide + L-tyrosine + NADP(+) = 3-bromo-L-tyrosine + NADPH. Functionally, catalyzes the dehalogenation of halotyrosines such as 3-bromo-L-tyrosine, 3-chloro-L-tyrosine, 3-iodo-L-tyrosine and 3,5-diiodo-L-tyrosine. During thyroid hormone biosynthesis, facilitates iodide salvage by catalysing the oxidative NADPH-dependent deiodination of the halogenated by-products of thyroid hormone production, monoiodotyrosine (L-MIT) and diiodotyrosine (L-DIT). The scavanged iodide can then reenter the hormone-producing pathways. Acts more efficiently on 3-iodo-L-tyrosine than 3,5-diiodo-L-tyrosine. In Pongo abelii (Sumatran orangutan), this protein is Iodotyrosine deiodinase 1 (IYD).